The primary structure comprises 266 residues: Putative cysteine-rich repeat secretory protein 20 (266 aa).

An N-terminal signal peptide occupies residues 1–33 (MYFPPSSVPKRLVLVHISAVVAIKLLLIRSVSS). 2 consecutive Gnk2-homologous domains span residues 40–142 (YLQH…SIRN) and 148–261 (YNNN…LYPF).

Belongs to the cysteine-rich repeat secretory protein family.

The protein resides in the secreted. In Arabidopsis thaliana (Mouse-ear cress), this protein is Putative cysteine-rich repeat secretory protein 20 (CRRSP20).